Consider the following 235-residue polypeptide: Serine protease SplA (235 aa).

Residues 1-35 (MNKNVMIKGLTALTILTSLGFAENISDQPHSIAKA) form the signal peptide. Active-site charge relay system residues include His74, Asp113, and Ser189.

This sequence belongs to the peptidase S1B family.

It is found in the secreted. The sequence is that of Serine protease SplA (splA) from Staphylococcus aureus.